The sequence spans 570 residues: Sulfite reductase [NADPH] hemoprotein beta-component (570 aa).

Residues cysteine 434, cysteine 440, cysteine 479, and cysteine 483 each contribute to the [4Fe-4S] cluster site. A siroheme-binding site is contributed by cysteine 483.

It belongs to the nitrite and sulfite reductase 4Fe-4S domain family. In terms of assembly, alpha(8)-beta(8). The alpha component is a flavoprotein, the beta component is a hemoprotein. Siroheme serves as cofactor. It depends on [4Fe-4S] cluster as a cofactor.

The catalysed reaction is hydrogen sulfide + 3 NADP(+) + 3 H2O = sulfite + 3 NADPH + 4 H(+). Its pathway is sulfur metabolism; hydrogen sulfide biosynthesis; hydrogen sulfide from sulfite (NADPH route): step 1/1. Functionally, component of the sulfite reductase complex that catalyzes the 6-electron reduction of sulfite to sulfide. This is one of several activities required for the biosynthesis of L-cysteine from sulfate. The chain is Sulfite reductase [NADPH] hemoprotein beta-component from Salmonella paratyphi B (strain ATCC BAA-1250 / SPB7).